The sequence spans 395 residues: Chorismate synthase (395 aa).

NADP(+) contacts are provided by arginine 40 and arginine 46. The tract at residues 99–120 (PREGRNAPLSRPRPGHADLTGM) is disordered. Residues 134-136 (RSS), 256-257 (QA), glycine 301, 316-320 (KPIPS), and arginine 342 each bind FMN.

This sequence belongs to the chorismate synthase family. Homotetramer. FMNH2 serves as cofactor.

The enzyme catalyses 5-O-(1-carboxyvinyl)-3-phosphoshikimate = chorismate + phosphate. It functions in the pathway metabolic intermediate biosynthesis; chorismate biosynthesis; chorismate from D-erythrose 4-phosphate and phosphoenolpyruvate: step 7/7. Its function is as follows. Catalyzes the anti-1,4-elimination of the C-3 phosphate and the C-6 proR hydrogen from 5-enolpyruvylshikimate-3-phosphate (EPSP) to yield chorismate, which is the branch point compound that serves as the starting substrate for the three terminal pathways of aromatic amino acid biosynthesis. This reaction introduces a second double bond into the aromatic ring system. The polypeptide is Chorismate synthase (Bifidobacterium longum (strain DJO10A)).